The following is a 487-amino-acid chain: Bifunctional protein GlmU (487 aa).

The segment at 1-240 is pyrophosphorylase; it reads MAEVTNCAAI…PEELSGVNDR (240 aa). Residues 12–15, K26, Q83, and 88–89 contribute to the UDP-N-acetyl-alpha-D-glucosamine site; these read LAAG and GT. D113 is a binding site for Mg(2+). UDP-N-acetyl-alpha-D-glucosamine is bound by residues G150, E165, N180, and N238. N238 is a binding site for Mg(2+). Residues 241-261 are linker; sequence VQLAAAGRLLNRRMVEEAMRG. The tract at residues 262-487 is N-acetyltransferase; that stretch reads GTTIVDPDTT…DAKANDQTTN (226 aa). Positions 343 and 361 each coordinate UDP-N-acetyl-alpha-D-glucosamine. The active-site Proton acceptor is the H373. The UDP-N-acetyl-alpha-D-glucosamine site is built by Y376 and N387. Acetyl-CoA is bound by residues A390, 396 to 397, S415, and A433; that span reads NY. The tract at residues 449-487 is disordered; the sequence is SGGKQRNIEGWVQKKRPGTPAAEAAGKAQDAKANDQTTN.

This sequence in the N-terminal section; belongs to the N-acetylglucosamine-1-phosphate uridyltransferase family. It in the C-terminal section; belongs to the transferase hexapeptide repeat family. Homotrimer. It depends on Mg(2+) as a cofactor.

It is found in the cytoplasm. The enzyme catalyses alpha-D-glucosamine 1-phosphate + acetyl-CoA = N-acetyl-alpha-D-glucosamine 1-phosphate + CoA + H(+). It carries out the reaction N-acetyl-alpha-D-glucosamine 1-phosphate + UTP + H(+) = UDP-N-acetyl-alpha-D-glucosamine + diphosphate. It participates in nucleotide-sugar biosynthesis; UDP-N-acetyl-alpha-D-glucosamine biosynthesis; N-acetyl-alpha-D-glucosamine 1-phosphate from alpha-D-glucosamine 6-phosphate (route II): step 2/2. The protein operates within nucleotide-sugar biosynthesis; UDP-N-acetyl-alpha-D-glucosamine biosynthesis; UDP-N-acetyl-alpha-D-glucosamine from N-acetyl-alpha-D-glucosamine 1-phosphate: step 1/1. It functions in the pathway bacterial outer membrane biogenesis; LPS lipid A biosynthesis. In terms of biological role, catalyzes the last two sequential reactions in the de novo biosynthetic pathway for UDP-N-acetylglucosamine (UDP-GlcNAc). The C-terminal domain catalyzes the transfer of acetyl group from acetyl coenzyme A to glucosamine-1-phosphate (GlcN-1-P) to produce N-acetylglucosamine-1-phosphate (GlcNAc-1-P), which is converted into UDP-GlcNAc by the transfer of uridine 5-monophosphate (from uridine 5-triphosphate), a reaction catalyzed by the N-terminal domain. The chain is Bifunctional protein GlmU from Corynebacterium aurimucosum (strain ATCC 700975 / DSM 44827 / CIP 107346 / CN-1) (Corynebacterium nigricans).